Reading from the N-terminus, the 141-residue chain is Large ribosomal subunit protein uL14 (141 aa).

It belongs to the universal ribosomal protein uL14 family. As to quaternary structure, part of the 50S ribosomal subunit. Forms a cluster with proteins L3 and L24e, part of which may contact the 16S rRNA in 2 intersubunit bridges.

Functionally, binds to 23S rRNA. Forms part of two intersubunit bridges in the 70S ribosome. In Pyrococcus furiosus (strain ATCC 43587 / DSM 3638 / JCM 8422 / Vc1), this protein is Large ribosomal subunit protein uL14.